The sequence spans 318 residues: NADH-ubiquinone oxidoreductase chain 1 (318 aa).

8 consecutive transmembrane segments (helical) span residues 3-23, 69-89, 102-122, 144-164, 171-191, 222-242, 253-273, and 294-314; these read LINL…LTLL, MLFI…WTPL, MLFI…SGWA, VTLA…TLLS, YIWL…STLA, LFFL…IILF, ELYT…FLWI, and LPLT…LAGI.

This sequence belongs to the complex I subunit 1 family. Core subunit of respiratory chain NADH dehydrogenase (Complex I) which is composed of 45 different subunits.

The protein resides in the mitochondrion inner membrane. It carries out the reaction a ubiquinone + NADH + 5 H(+)(in) = a ubiquinol + NAD(+) + 4 H(+)(out). Its function is as follows. Core subunit of the mitochondrial membrane respiratory chain NADH dehydrogenase (Complex I) which catalyzes electron transfer from NADH through the respiratory chain, using ubiquinone as an electron acceptor. Essential for the catalytic activity and assembly of complex I. This chain is NADH-ubiquinone oxidoreductase chain 1 (MT-ND1), found in Murina suilla (Brown tube-nosed bat).